A 300-amino-acid chain; its full sequence is MIKTNWEGNCFLNFFNNKSSLENVDKTIFKSKSTSPYKLLKSTHDQEGRCILPVLHTAGGLVGGDLLEFEVNLEKNSKVLLTTSSAQKVYGSVGISKVNPKGTFSKQNNLIKILDNSHLEYLPQETIIFANGLYEQKFKVFISETSSFLFTDLIRLGRSSSGESIESGVFRSKLEIVRNNDLYDDWEYVDQIELSKASYVAKSGMDYMPVFGSLIWICEKDFSKSNINNLVGNIKKIFNETENNLSIGILENGISVRFLGSSSQDARKCFFCIWKQIRSVCGFCEPKYQGVWPLQDPMNY.

It belongs to the UreD family. As to quaternary structure, ureD, UreF and UreG form a complex that acts as a GTP-hydrolysis-dependent molecular chaperone, activating the urease apoprotein by helping to assemble the nickel containing metallocenter of UreC. The UreE protein probably delivers the nickel.

It is found in the cytoplasm. In terms of biological role, required for maturation of urease via the functional incorporation of the urease nickel metallocenter. This Prochlorococcus marinus (strain MIT 9215) protein is Urease accessory protein UreD.